The chain runs to 323 residues: Sphingomyelinase D (323 aa).

The N-terminal stretch at 1–20 (MISLLRLCSFLAAGSILVQG) is a signal peptide. His-59 is a catalytic residue. Mg(2+) is bound by residues Glu-79, Asp-81, and Asp-127. The SMD-tail motif lies at 308–315 (ATNDDNPW).

The protein belongs to the sphingomyelinase D/phospholipase D family. Mg(2+) serves as cofactor.

The protein resides in the secreted. The catalysed reaction is a sphingomyelin + H2O = an N-acylsphing-4-enine 1-phosphate + choline + H(+). In terms of biological role, catalyzes the hydrolysis of sphingomyelin. Sphingomyelinases D are produced by some spider in their venoms, but also by arthropods such as ticks, or pathogenic bacteria and fungi. They might play a role in pathogenicity through different mechanisms, such as membrane destabilization and host cell penetration, but also pulmonary inflammation and cutaneous lesions. The protein is Sphingomyelinase D of Trichophyton rubrum (strain ATCC MYA-4607 / CBS 118892) (Athlete's foot fungus).